The following is a 393-amino-acid chain: Phosphoglycerate kinase (393 aa).

Substrate is bound by residues 21–23, R36, 59–62, R114, and R147; these read DIN and HFGR. ATP contacts are provided by residues K197, E319, and 349–352; that span reads GGDT.

The protein belongs to the phosphoglycerate kinase family. As to quaternary structure, monomer.

The protein resides in the cytoplasm. It catalyses the reaction (2R)-3-phosphoglycerate + ATP = (2R)-3-phospho-glyceroyl phosphate + ADP. It participates in carbohydrate degradation; glycolysis; pyruvate from D-glyceraldehyde 3-phosphate: step 2/5. The polypeptide is Phosphoglycerate kinase (Dinoroseobacter shibae (strain DSM 16493 / NCIMB 14021 / DFL 12)).